The primary structure comprises 719 residues: DNA ligase (719 aa).

NAD(+) contacts are provided by residues 42–46 (DAAYD), 92–93 (SL), and Glu-126. Lys-128 (N6-AMP-lysine intermediate) is an active-site residue. NAD(+)-binding residues include Arg-149, Glu-185, Lys-301, and Lys-325. The Zn(2+) site is built by Cys-430, Cys-433, Cys-448, and Cys-454. The BRCT domain occupies 640 to 719 (ATGSPVEGKT…DDWFKLVGED (80 aa)).

This sequence belongs to the NAD-dependent DNA ligase family. LigA subfamily. It depends on Mg(2+) as a cofactor. Requires Mn(2+) as cofactor.

It carries out the reaction NAD(+) + (deoxyribonucleotide)n-3'-hydroxyl + 5'-phospho-(deoxyribonucleotide)m = (deoxyribonucleotide)n+m + AMP + beta-nicotinamide D-nucleotide.. In terms of biological role, DNA ligase that catalyzes the formation of phosphodiester linkages between 5'-phosphoryl and 3'-hydroxyl groups in double-stranded DNA using NAD as a coenzyme and as the energy source for the reaction. It is essential for DNA replication and repair of damaged DNA. The protein is DNA ligase of Brucella suis biovar 1 (strain 1330).